The sequence spans 190 residues: Threonylcarbamoyl-AMP synthase (190 aa).

The region spanning 7 to 190 (TGSSAAVVDL…ALTGELFRQG (184 aa)) is the YrdC-like domain.

The protein belongs to the SUA5 family. TsaC subfamily.

It is found in the cytoplasm. The catalysed reaction is L-threonine + hydrogencarbonate + ATP = L-threonylcarbamoyladenylate + diphosphate + H2O. Its function is as follows. Required for the formation of a threonylcarbamoyl group on adenosine at position 37 (t(6)A37) in tRNAs that read codons beginning with adenine. Catalyzes the conversion of L-threonine, HCO(3)(-)/CO(2) and ATP to give threonylcarbamoyl-AMP (TC-AMP) as the acyladenylate intermediate, with the release of diphosphate. In Salmonella typhi, this protein is Threonylcarbamoyl-AMP synthase.